The chain runs to 167 residues: Photosystem I assembly protein Ycf3 (167 aa).

3 TPR repeats span residues 35-68 (AFTY…EIDP), 72-105 (SYIL…NPSL), and 120-153 (GEQA…APGN).

The protein belongs to the Ycf3 family.

Its subcellular location is the plastid. It is found in the chloroplast thylakoid membrane. Its function is as follows. Essential for the assembly of the photosystem I (PSI) complex. May act as a chaperone-like factor to guide the assembly of the PSI subunits. The chain is Photosystem I assembly protein Ycf3 from Chara vulgaris (Common stonewort).